The primary structure comprises 189 residues: Peptidyl-tRNA hydrolase (189 aa).

Tyr15 is a tRNA binding site. The Proton acceptor role is filled by His20. TRNA is bound by residues Phe66, Asn68, and Asn114.

The protein belongs to the PTH family. Monomer.

It localises to the cytoplasm. The catalysed reaction is an N-acyl-L-alpha-aminoacyl-tRNA + H2O = an N-acyl-L-amino acid + a tRNA + H(+). Hydrolyzes ribosome-free peptidyl-tRNAs (with 1 or more amino acids incorporated), which drop off the ribosome during protein synthesis, or as a result of ribosome stalling. Functionally, catalyzes the release of premature peptidyl moieties from peptidyl-tRNA molecules trapped in stalled 50S ribosomal subunits, and thus maintains levels of free tRNAs and 50S ribosomes. The sequence is that of Peptidyl-tRNA hydrolase from Dichelobacter nodosus (strain VCS1703A).